The sequence spans 325 residues: Siroheme decarboxylase NirDL subunit (325 aa).

It belongs to the Ahb/Nir family. In terms of assembly, forms a complex composed of NirDL, NirG and NirH. All proteins are required for the total conversion of siroheme to didecarboxysiroheme.

The catalysed reaction is siroheme + 2 H(+) = 12,18-didecarboxysiroheme + 2 CO2. The protein operates within porphyrin-containing compound metabolism. Functionally, involved in heme d1 biosynthesis. Catalyzes the decarboxylation of siroheme into didecarboxysiroheme. The sequence is that of Siroheme decarboxylase NirDL subunit from Paracoccus denitrificans (strain Pd 1222).